The primary structure comprises 219 residues: MSKAQAVRRIGILGGTFDPVHIGHLRSALEVTEFMGLEELRLLPNARPPHRDTPQVAAEDRLAMVREAVQGVERLSVDARELERDKPSYTIDTLESVRAELGADDQLFLVLGWDAFCGLPGWHRWEELLQHCHILVLQRPDADVEPPDELRNLLAARSESDPTAMSGPAGSISFVWQTPLAVSATQIRQLLASGRSVRFLVPDAVLAYIEAHELYRAPN.

The protein belongs to the NadD family.

The enzyme catalyses nicotinate beta-D-ribonucleotide + ATP + H(+) = deamido-NAD(+) + diphosphate. The protein operates within cofactor biosynthesis; NAD(+) biosynthesis; deamido-NAD(+) from nicotinate D-ribonucleotide: step 1/1. In terms of biological role, catalyzes the reversible adenylation of nicotinate mononucleotide (NaMN) to nicotinic acid adenine dinucleotide (NaAD). This is Probable nicotinate-nucleotide adenylyltransferase from Pseudomonas putida (strain W619).